The following is a 425-amino-acid chain: WD repeat-containing protein jip5 (425 aa).

WD repeat units follow at residues 9-48, 72-111, 117-158, 221-262, and 318-355; these read PLSA…AASD, RHKG…VENK, EKNG…SKVS, ISST…DQDE, and DETE…ADRY. Residues 40–63 are disordered; sequence LPTDEAASDDDETSNASSRNGRGH. Residues 358 to 425 are disordered; that stretch reads MPGEKRMYGD…LDSMESSVVY (68 aa). Acidic residues predominate over residues 367-385; sequence DSDDSDEGDDSDDDSDDSD. The span at 395 to 404 shows a compositional bias: basic residues; it reads NKRKKTKAKG.

The protein belongs to the WD repeat WDR55 family.

It is found in the nucleus. The protein localises to the nucleolus. This Aspergillus niger (strain ATCC MYA-4892 / CBS 513.88 / FGSC A1513) protein is WD repeat-containing protein jip5 (jip5).